We begin with the raw amino-acid sequence, 681 residues long: DNA ligase (681 aa).

NAD(+) contacts are provided by residues 35–39 (DAEYD), 84–85 (SL), and glutamate 115. The active-site N6-AMP-lysine intermediate is the lysine 117. 4 residues coordinate NAD(+): arginine 138, glutamate 175, lysine 293, and lysine 317. Cysteine 411, cysteine 414, cysteine 429, and cysteine 435 together coordinate Zn(2+). The BRCT domain maps to 598–681 (RTNLAVPGKT…SLLRDTSSSE (84 aa)).

It belongs to the NAD-dependent DNA ligase family. LigA subfamily. The cofactor is Mg(2+). Mn(2+) is required as a cofactor.

The catalysed reaction is NAD(+) + (deoxyribonucleotide)n-3'-hydroxyl + 5'-phospho-(deoxyribonucleotide)m = (deoxyribonucleotide)n+m + AMP + beta-nicotinamide D-nucleotide.. Functionally, DNA ligase that catalyzes the formation of phosphodiester linkages between 5'-phosphoryl and 3'-hydroxyl groups in double-stranded DNA using NAD as a coenzyme and as the energy source for the reaction. It is essential for DNA replication and repair of damaged DNA. The polypeptide is DNA ligase (Nitrosomonas europaea (strain ATCC 19718 / CIP 103999 / KCTC 2705 / NBRC 14298)).